Reading from the N-terminus, the 543-residue chain is Chaperonin GroEL 4 (543 aa).

Residues 29–32 (TLGP), 86–90 (DGTTT), Gly411, 476–478 (DAA), and Asp492 contribute to the ATP site.

Belongs to the chaperonin (HSP60) family. In terms of assembly, forms a cylinder of 14 subunits composed of two heptameric rings stacked back-to-back. Interacts with the co-chaperonin GroES.

The protein resides in the cytoplasm. The catalysed reaction is ATP + H2O + a folded polypeptide = ADP + phosphate + an unfolded polypeptide.. In terms of biological role, together with its co-chaperonin GroES, plays an essential role in assisting protein folding. The GroEL-GroES system forms a nano-cage that allows encapsulation of the non-native substrate proteins and provides a physical environment optimized to promote and accelerate protein folding. In Bradyrhizobium diazoefficiens (strain JCM 10833 / BCRC 13528 / IAM 13628 / NBRC 14792 / USDA 110), this protein is Chaperonin GroEL 4.